Reading from the N-terminus, the 686-residue chain is Methionine--tRNA ligase (686 aa).

Positions 15–25 (PYANGSIHLGH) match the 'HIGH' region motif. Residues cysteine 146, cysteine 149, cysteine 159, and cysteine 162 each contribute to the Zn(2+) site. A 'KMSKS' region motif is present at residues 332-336 (KMSKS). Lysine 335 is a binding site for ATP. One can recognise a tRNA-binding domain in the interval 585-686 (AFEAVDMRIA…EGAQPGMRVM (102 aa)).

This sequence belongs to the class-I aminoacyl-tRNA synthetase family. MetG type 1 subfamily. As to quaternary structure, homodimer. Zn(2+) serves as cofactor.

The protein localises to the cytoplasm. It catalyses the reaction tRNA(Met) + L-methionine + ATP = L-methionyl-tRNA(Met) + AMP + diphosphate. Is required not only for elongation of protein synthesis but also for the initiation of all mRNA translation through initiator tRNA(fMet) aminoacylation. This chain is Methionine--tRNA ligase, found in Aliivibrio salmonicida (strain LFI1238) (Vibrio salmonicida (strain LFI1238)).